A 279-amino-acid chain; its full sequence is Oxygen-dependent coproporphyrinogen-III oxidase (279 aa).

Ser-102 is a substrate binding site. A divalent metal cation contacts are provided by His-106 and His-116. The Proton donor role is filled by His-116. 118-120 is a substrate binding site; sequence NTR. A divalent metal cation is bound by residues His-149 and His-179. An important for dimerization region spans residues 244–279; that stretch reads YVEFNLLYDRGTKFGLMTDGNVEAILMSLPPEVKWA.

The protein belongs to the aerobic coproporphyrinogen-III oxidase family. As to quaternary structure, homodimer. A divalent metal cation serves as cofactor.

Its subcellular location is the cytoplasm. It catalyses the reaction coproporphyrinogen III + O2 + 2 H(+) = protoporphyrinogen IX + 2 CO2 + 2 H2O. The protein operates within porphyrin-containing compound metabolism; protoporphyrin-IX biosynthesis; protoporphyrinogen-IX from coproporphyrinogen-III (O2 route): step 1/1. Its function is as follows. Involved in the heme biosynthesis. Catalyzes the aerobic oxidative decarboxylation of propionate groups of rings A and B of coproporphyrinogen-III to yield the vinyl groups in protoporphyrinogen-IX. In Rickettsia bellii (strain RML369-C), this protein is Oxygen-dependent coproporphyrinogen-III oxidase.